The chain runs to 713 residues: Protein tyrosine phosphatase domain-containing protein 1 (713 aa).

The Tyrosine-protein phosphatase domain maps to Tyr80 to Cys251. Residue Cys188 is the Phosphocysteine intermediate of the active site.

Belongs to the protein-tyrosine phosphatase family. Non-receptor class PTPDC1 subfamily.

Its function is as follows. May play roles in cilia formation and/or maintenance. The chain is Protein tyrosine phosphatase domain-containing protein 1 (ptpdc1) from Danio rerio (Zebrafish).